We begin with the raw amino-acid sequence, 457 residues long: MAKAKRTTKFVCQACGYESAKWMGKCPNCNEWNQMVEALEPSKKSRSAFNHTGEPSKATPITQIASETEKRVETNMPELNRVLGGGVVPGSMVLVGGDPGIGKSTLLLQVSAQLTLTNKKVLYISGEESIKQTKLRAERLQVSGDNLYVYAETNLEAVQETIDFVKPDFVVIDSIQTVYHSDVTSAAGSVSQVRECTATLMRIAKMQNIAIFIVGHVTKEGAIAGPRLLEHMVDTVLYFEGERHHAYRILRAVKNRFGSTNEMGIFEMRDVGLVEVANPSEVFLEERLEGASGSTVVASMEGTRPVLVEIQALVSPTMFGNAKRMATGIDYNKVSLIMAVLEKRVGLMLQNQDAYLKAAGGVKLDEPAVDLAVAVSVASSYRDKPTRSTDCFIGELGLTGEIRRVARIEQRVQEAAKLGFKRIFIPKNNEGNWKIPKDVQVVGVETIGEALKKALPD.

The C4-type zinc-finger motif lies at 12–29 (CQACGYESAKWMGKCPNC). Residue 97–104 (GDPGIGKS) coordinates ATP. The short motif at 254 to 258 (KNRFG) is the RadA KNRFG motif element. Positions 353-457 (DAYLKAAGGV…GEALKKALPD (105 aa)) are lon-protease-like.

It belongs to the RecA family. RadA subfamily.

Its function is as follows. DNA-dependent ATPase involved in processing of recombination intermediates, plays a role in repairing DNA breaks. Stimulates the branch migration of RecA-mediated strand transfer reactions, allowing the 3' invading strand to extend heteroduplex DNA faster. Binds ssDNA in the presence of ADP but not other nucleotides, has ATPase activity that is stimulated by ssDNA and various branched DNA structures, but inhibited by SSB. Does not have RecA's homology-searching function. The chain is DNA repair protein RadA from Listeria monocytogenes serovar 1/2a (strain ATCC BAA-679 / EGD-e).